The following is an 84-amino-acid chain: Small ribosomal subunit protein bS20 (84 aa).

The tract at residues 1–28 is disordered; the sequence is MPNIKSAIKRVKTADTRNSRNASQRSAM.

It belongs to the bacterial ribosomal protein bS20 family.

Functionally, binds directly to 16S ribosomal RNA. This Listeria welshimeri serovar 6b (strain ATCC 35897 / DSM 20650 / CCUG 15529 / CIP 8149 / NCTC 11857 / SLCC 5334 / V8) protein is Small ribosomal subunit protein bS20.